Reading from the N-terminus, the 180-residue chain is Large ribosomal subunit protein uL5 (180 aa).

This sequence belongs to the universal ribosomal protein uL5 family. In terms of assembly, part of the 50S ribosomal subunit; part of the 5S rRNA/L5/L18/L25 subcomplex. Contacts the 5S rRNA and the P site tRNA. Forms a bridge to the 30S subunit in the 70S ribosome.

Its function is as follows. This is one of the proteins that bind and probably mediate the attachment of the 5S RNA into the large ribosomal subunit, where it forms part of the central protuberance. In the 70S ribosome it contacts protein S13 of the 30S subunit (bridge B1b), connecting the 2 subunits; this bridge is implicated in subunit movement. Contacts the P site tRNA; the 5S rRNA and some of its associated proteins might help stabilize positioning of ribosome-bound tRNAs. The sequence is that of Large ribosomal subunit protein uL5 from Polynucleobacter necessarius subsp. necessarius (strain STIR1).